Here is a 229-residue protein sequence, read N- to C-terminus: Peptidase E (229 aa).

Residues Ser120, Asp135, and His157 each act as charge relay system in the active site.

Belongs to the peptidase S51 family.

It is found in the cytoplasm. The catalysed reaction is Dipeptidase E catalyzes the hydrolysis of dipeptides Asp-|-Xaa. It does not act on peptides with N-terminal Glu, Asn or Gln, nor does it cleave isoaspartyl peptides.. Hydrolyzes dipeptides containing N-terminal aspartate residues. May play a role in allowing the cell to use peptide aspartate to spare carbon otherwise required for the synthesis of the aspartate family of amino acids. The polypeptide is Peptidase E (Salmonella paratyphi C (strain RKS4594)).